We begin with the raw amino-acid sequence, 256 residues long: tRNA pseudouridine synthase A 1 (256 aa).

Catalysis depends on Asp53, which acts as the Nucleophile. Tyr111 is a substrate binding site.

The protein belongs to the tRNA pseudouridine synthase TruA family. In terms of assembly, homodimer.

It carries out the reaction uridine(38/39/40) in tRNA = pseudouridine(38/39/40) in tRNA. Its function is as follows. Formation of pseudouridine at positions 38, 39 and 40 in the anticodon stem and loop of transfer RNAs. In Protochlamydia amoebophila (strain UWE25), this protein is tRNA pseudouridine synthase A 1.